The chain runs to 259 residues: Global transcriptional regulator CodY (259 aa).

The tract at residues 1–155 (MTLLEKTRKI…GGTVVGMEIL (155 aa)) is GAF domain. Residues 203 to 222 (ASKIADRVGITRSVIVNALR) constitute a DNA-binding region (H-T-H motif).

This sequence belongs to the CodY family.

It is found in the cytoplasm. DNA-binding global transcriptional regulator which is involved in the adaptive response to starvation and acts by directly or indirectly controlling the expression of numerous genes in response to nutrient availability. During rapid exponential growth, CodY is highly active and represses genes whose products allow adaptation to nutrient depletion. The protein is Global transcriptional regulator CodY of Listeria welshimeri serovar 6b (strain ATCC 35897 / DSM 20650 / CCUG 15529 / CIP 8149 / NCTC 11857 / SLCC 5334 / V8).